The chain runs to 216 residues: Regulator of G-protein signaling 19 (216 aa).

A compositionally biased stretch (basic and acidic residues) spans 1–19; the sequence is MPTPHEAEKQHTGPEEADR. The disordered stretch occupies residues 1-30; sequence MPTPHEAEKQHTGPEEADRPPSMSSHDAAP. Phosphoserine occurs at positions 24 and 97. Residues 90–206 enclose the RGS domain; the sequence is SFDKLMHSPT…LTSPTYRSLL (117 aa). The residue at position 151 (Ser151) is a Phosphoserine; by MAPK1 and MAPK3. The segment at 207-216 is interaction with GIPC; the sequence is LQGAPQSSEA.

Interacts with GIPC PDZ domain. Interacts with GNAO1. Fatty acylated. Heavily palmitoylated in the cysteine string motif. In terms of processing, phosphorylated, mainly on serine residues.

It localises to the membrane. Functionally, inhibits signal transduction by increasing the GTPase activity of G protein alpha subunits thereby driving them into their inactive GDP-bound form. Binds to G-alpha subfamily 1 members, with the order G(i)a3 &gt; G(i)a1 &gt; G(o)a &gt;&gt; G(z)a/G(i)a2. Activity on G(z)-alpha is inhibited by phosphorylation and palmitoylation of the G-protein. The sequence is that of Regulator of G-protein signaling 19 (Rgs19) from Mus musculus (Mouse).